A 207-amino-acid polypeptide reads, in one-letter code: Nuclear transcription factor Y subunit beta (207 aa).

The tract at residues 1-52 (MTMDGDSSTTDASQLGISADYIGGSHYVIQPHDDTEDSMNDHEDTNGSKESF) is a domain. The segment at 27 to 52 (YVIQPHDDTEDSMNDHEDTNGSKESF) is disordered. The span at 39–52 (MNDHEDTNGSKESF) shows a compositional bias: basic and acidic residues. Residues 53 to 142 (REQDIYLPIA…PLKLYLQKFR (90 aa)) are b domain. A DNA-binding region spans residues 59–65 (LPIANVA). The tract at residues 86 to 97 (VQECVSEFISFI) is subunit association domain (SAD). Lys140 is covalently cross-linked (Glycyl lysine isopeptide (Lys-Gly) (interchain with G-Cter in ubiquitin)). The c domain stretch occupies residues 143 to 207 (EAMKGEKGIG…ISGVQQIQFS (65 aa)).

The protein belongs to the NFYB/HAP3 subunit family. As to quaternary structure, heterotrimeric transcription factor composed of three components, NF-YA, NF-YB and NF-YC. NF-YB and NF-YC must interact and dimerize for NF-YA association and DNA binding. Interacts with C1QBP. In terms of processing, monoubiquitination at Lys-140 plays an important role in transcriptional activation by allowing the deposition of histone H3 methylations as well as histone H2B monoubiquitination at 'Lys-121'.

It localises to the nucleus. Component of the sequence-specific heterotrimeric transcription factor (NF-Y) which specifically recognizes a 5'-CCAAT-3' box motif found in the promoters of its target genes. NF-Y can function as both an activator and a repressor, depending on its interacting cofactors. The chain is Nuclear transcription factor Y subunit beta (Nfyb) from Mus musculus (Mouse).